Here is a 723-residue protein sequence, read N- to C-terminus: uncharacterized protein (723 aa).

A compositionally biased stretch (basic residues) spans 1 to 12 (MTGKKKNRHQKK). Disordered regions lie at residues 1-166 (MTGK…EKEI), 181-212 (IKRK…SGWG), 268-289 (LPLS…DNDN), and 391-455 (KNKS…NTST). Residues 30 to 42 (DETTTTTTTTTTT) show a composition bias toward low complexity. Composition is skewed to basic and acidic residues over residues 45–129 (EETK…KTDD) and 149–166 (TDIK…EKEI). The stretch at 53–173 (IVENKDEDKK…KEIEDPNKKY (121 aa)) forms a coiled coil. Over residues 181–190 (IKRKKEKKVK) the composition is skewed to basic residues. The segment covering 193–204 (PVQPTPPVPAPA) has biased composition (pro residues). Residues 272 to 288 (DTEDSDNDNDNGGDDND) show a composition bias toward acidic residues. Residues 397 to 455 (DENNNNNNNNNQQQPQQQQTTSPTLSTSPTSPKSPTTTTTNTTTTTTTNTNNNNNNTST) show a composition bias toward low complexity.

This is an uncharacterized protein from Dictyostelium discoideum (Social amoeba).